The primary structure comprises 485 residues: Predicted GPI-anchored protein 27 (485 aa).

The N-terminal stretch at 1–20 (MHFTSSLLATLIWFTLPVQS) is a signal peptide. 4 N-linked (GlcNAc...) asparagine glycosylation sites follow: N30, N86, N96, and N444. G467 carries the GPI-anchor amidated glycine lipid modification. A propeptide spans 468-485 (LVLVSSGVLLGTCLLFIL) (removed in mature form).

The protein localises to the cell membrane. The sequence is that of Predicted GPI-anchored protein 27 (PGA27) from Candida albicans (strain SC5314 / ATCC MYA-2876) (Yeast).